Reading from the N-terminus, the 87-residue chain is Apolipoprotein C-I (87 aa).

Residues 1-26 form the signal peptide; that stretch reads MRLFLSLPVLVVVLAMVLEGPAPAQA.

This sequence belongs to the apolipoprotein C1 family.

The protein resides in the secreted. Its function is as follows. Inhibitor of lipoprotein binding to the low density lipoprotein (LDL) receptor, LDL receptor-related protein, and very low density lipoprotein (VLDL) receptor. Associates with high density lipoproteins (HDL) and the triacylglycerol-rich lipoproteins in the plasma and makes up about 10% of the protein of the VLDL and 2% of that of HDL. Appears to interfere directly with fatty acid uptake and is also the major plasma inhibitor of cholesteryl ester transfer protein (CETP). Binds free fatty acids and reduces their intracellular esterification. Modulates the interaction of APOE with beta-migrating VLDL and inhibits binding of beta-VLDL to the LDL receptor-related protein. This Zalophus californianus (California sealion) protein is Apolipoprotein C-I (APOC1).